Here is a 491-residue protein sequence, read N- to C-terminus: Glutamate--tRNA ligase (491 aa).

Positions 13–23 (PSPTGFLHIGN) match the 'HIGH' region motif. Zn(2+) is bound by residues Cys-110, Cys-112, Cys-137, and His-139. A 'KMSKS' region motif is present at residues 254-258 (KLSKR). An ATP-binding site is contributed by Lys-257.

The protein belongs to the class-I aminoacyl-tRNA synthetase family. Glutamate--tRNA ligase type 1 subfamily. Monomer. The cofactor is Zn(2+).

The protein resides in the cytoplasm. It carries out the reaction tRNA(Glu) + L-glutamate + ATP = L-glutamyl-tRNA(Glu) + AMP + diphosphate. Catalyzes the attachment of glutamate to tRNA(Glu) in a two-step reaction: glutamate is first activated by ATP to form Glu-AMP and then transferred to the acceptor end of tRNA(Glu). The sequence is that of Glutamate--tRNA ligase from Listeria monocytogenes serovar 1/2a (strain ATCC BAA-679 / EGD-e).